Reading from the N-terminus, the 308-residue chain is UDP-N-acetylenolpyruvoylglucosamine reductase (308 aa).

In terms of domain architecture, FAD-binding PCMH-type spans 30-213 (RVGGAAEWFI…KATTQSHLDH (184 aa)). Arginine 176 is a catalytic residue. Serine 227 functions as the Proton donor in the catalytic mechanism. Residue glutamate 297 is part of the active site.

Belongs to the MurB family. The cofactor is FAD.

The protein resides in the cytoplasm. It catalyses the reaction UDP-N-acetyl-alpha-D-muramate + NADP(+) = UDP-N-acetyl-3-O-(1-carboxyvinyl)-alpha-D-glucosamine + NADPH + H(+). It participates in cell wall biogenesis; peptidoglycan biosynthesis. Cell wall formation. In Acaryochloris marina (strain MBIC 11017), this protein is UDP-N-acetylenolpyruvoylglucosamine reductase.